A 411-amino-acid chain; its full sequence is Adenylosuccinate synthetase (411 aa).

Residues 11–17 and 39–41 contribute to the GTP site; these read GDEGKGK and GHT. The active-site Proton acceptor is D12. Residues D12 and G39 each coordinate Mg(2+). IMP is bound by residues 12–15, 37–40, T121, R135, Q215, T230, and R294; these read DEGK and NAGH. Catalysis depends on H40, which acts as the Proton donor. 290–296 provides a ligand contact to substrate; the sequence is TTTKRPR. Residues R296, 322 to 324, and 400 to 402 contribute to the GTP site; these read KLD and STS.

It belongs to the adenylosuccinate synthetase family. Homodimer. Requires Mg(2+) as cofactor.

The protein localises to the cytoplasm. The catalysed reaction is IMP + L-aspartate + GTP = N(6)-(1,2-dicarboxyethyl)-AMP + GDP + phosphate + 2 H(+). Its pathway is purine metabolism; AMP biosynthesis via de novo pathway; AMP from IMP: step 1/2. Plays an important role in the de novo pathway of purine nucleotide biosynthesis. Catalyzes the first committed step in the biosynthesis of AMP from IMP. The sequence is that of Adenylosuccinate synthetase from Helicobacter pylori (strain ATCC 700392 / 26695) (Campylobacter pylori).